Consider the following 1827-residue polypeptide: Chromodomain-helicase-DNA-binding protein 2 (1827 aa).

Basic and acidic residues predominate over residues 1 to 14; sequence MMRNKDKSQEEDSS. Residues 1-264 are disordered; it reads MMRNKDKSQE…EQQDNSETIE (264 aa). A compositionally biased stretch (low complexity) spans 15–75; that stretch reads LHSNASSRSA…SESESAGSKS (61 aa). Composition is skewed to basic and acidic residues over residues 81–101, 115–128, and 146–155; these read EAKE…KMWE, SRQE…KEEA, and KKQEKWKQDP. Over residues 175-204 the composition is skewed to basic residues; that stretch reads GKARRPVPRRTVPKPQVKKQPKIQRGKRKK. Residues Ser-207 and Ser-208 each carry the phosphoserine modification. Over residues 234–258 the composition is skewed to acidic residues; sequence EDDDFETDSDDLIEMTGEGGDEQQD. A Phosphothreonine modification is found at Thr-240. At Ser-242 the chain carries Phosphoserine. Chromo domains lie at 261–353 and 378–456; these read ETIE…QWLG and QIVE…IPTR. Residues 496 to 666 form the Helicase ATP-binding domain; that stretch reads AHSWCKSNSV…WSLLHFIMPE (171 aa). Position 509–516 (509–516) interacts with ATP; sequence DEMGLGKT. The DEAH box signature appears at 617 to 620; that stretch reads DEAH. The region spanning 795-946 is the Helicase C-terminal domain; that stretch reads LLDKLLTRLR…HLVIQRMDTT (152 aa). Disordered regions lie at residues 1030–1124, 1329–1465, 1556–1638, and 1679–1827; these read EDEE…RSVR, GTVA…DDLD, HKKR…ADRG, and HMDA…VRKT. Positions 1037–1065 are enriched in basic and acidic residues; sequence ERPHKDWDEIIPEEQRKKVEEEERQKELE. Residues Ser-1085, Ser-1087, Ser-1365, and Ser-1386 each carry the phosphoserine modification. Residues 1347 to 1371 are compositionally biased toward basic and acidic residues; it reads KKENKAPRLKDEHGLEPASPRHSDN. 2 stretches are compositionally biased toward basic and acidic residues: residues 1396–1431 and 1565–1574; these read ENKE…KGGD and EQKKKDDSLG. The segment at 1464–1566 is CHD1 helical C-terminal domain (CHCT); it reads LDQETFSICK…KKRSQEEEEQ (103 aa). A compositionally biased stretch (polar residues) spans 1584–1601; the sequence is SGSSRDSLISQSHTSHNL. 4 stretches are compositionally biased toward basic and acidic residues: residues 1697–1719, 1738–1748, 1759–1771, and 1794–1813; these read RPYE…DRHH, QDFRRMSDHRP, DHYR…KLGE, and SPHD…RSLE. Ser-1806 carries the post-translational modification Phosphoserine.

Interacts with MYOD1. Interacts with histone H3.3. In terms of tissue distribution, widely expressed.

The protein resides in the nucleus. It catalyses the reaction ATP + H2O = ADP + phosphate + H(+). ATP-dependent chromatin-remodeling factor that specifically binds to the promoter of target genes, leading to chromatin remodeling, possibly by promoting deposition of histone H3.3. Involved in myogenesis via interaction with MYOD1: binds to myogenic gene regulatory sequences and mediates incorporation of histone H3.3 prior to the onset of myogenic gene expression, promoting their expression. The protein is Chromodomain-helicase-DNA-binding protein 2 (Chd2) of Mus musculus (Mouse).